We begin with the raw amino-acid sequence, 187 residues long: Sliding-clamp-loader small subunit (187 aa).

It belongs to the Tevenvirinae sliding-clamp-loader small subunit family. The sliding-clamp-loader consists of 4 large subunits and 1 small subunit. Interacts with the sliding clamp; this interaction allows the sliding-clamp-loader to open the sliding clamp. Part of the replicase complex that includes the DNA polymerase, the polymerase clamp, the clamp loader complex, the single-stranded DNA binding protein, the primase, the helicase and the helicase assembly factor.

Its function is as follows. Forms the sliding-clamp-loader together with the small subunit. The clamp loader holds the clamp in an open conformation and places it onto the DNA. This chain is Sliding-clamp-loader small subunit (62), found in Escherichia coli (Bacteriophage T4).